Consider the following 125-residue polypeptide: MORF4 family-associated protein 1 (125 aa).

The disordered stretch occupies residues 76 to 99 (ESALNHLQGAGGAEPRGPRAEKAD). A coiled-coil region spans residues 94-124 (RAEKADEKAQEMAKMAEMLVQLVRRIEKSES).

It belongs to the MORF4 family-associated protein family. As to quaternary structure, found in a complex composed of MORF4L1, MRFAP1 and RB1. Interacts via its N-terminus with MORF4L1. Interacts with CSTB and MORF4L2. As to expression, widely expressed in all tissues examined and as early as 7 days during embryonic development.

Its subcellular location is the nucleus. The protein localises to the cytoplasm. The protein resides in the perinuclear region. This Mus musculus (Mouse) protein is MORF4 family-associated protein 1.